Here is a 34-residue protein sequence, read N- to C-terminus: Ornithine carbamoyltransferase, catabolic (34 aa).

Belongs to the aspartate/ornithine carbamoyltransferase superfamily. OTCase family. As to quaternary structure, probably nonameric or dodecameric.

Its subcellular location is the cytoplasm. It carries out the reaction carbamoyl phosphate + L-ornithine = L-citrulline + phosphate + H(+). Its pathway is amino-acid degradation; L-arginine degradation via ADI pathway; carbamoyl phosphate from L-arginine: step 2/2. The sequence is that of Ornithine carbamoyltransferase, catabolic (arcB) from Pseudomonas putida (Arthrobacter siderocapsulatus).